The sequence spans 329 residues: Centromere protein L (329 aa).

Ser40 and Ser54 each carry phosphoserine.

Belongs to the CENP-L/IML3 family. In terms of assembly, component of the CENPA-CAD complex, composed of CENPI, CENPK, CENPL, CENPO, CENPP, CENPQ, CENPR and CENPS. The CENPA-CAD complex interacts with the CENPA-NAC complex, at least composed of CENPA, CENPC, CENPH, CENPM, CENPN, CENPT and CENPU.

It localises to the nucleus. Its subcellular location is the chromosome. The protein localises to the centromere. Component of the CENPA-CAD (nucleosome distal) complex, a complex recruited to centromeres which is involved in assembly of kinetochore proteins, mitotic progression and chromosome segregation. May be involved in incorporation of newly synthesized CENPA into centromeres via its interaction with the CENPA-NAC complex. This chain is Centromere protein L (Cenpl), found in Mus musculus (Mouse).